The chain runs to 177 residues: Large ribosomal subunit protein uL6 (177 aa).

This sequence belongs to the universal ribosomal protein uL6 family. As to quaternary structure, part of the 50S ribosomal subunit.

Functionally, this protein binds to the 23S rRNA, and is important in its secondary structure. It is located near the subunit interface in the base of the L7/L12 stalk, and near the tRNA binding site of the peptidyltransferase center. This chain is Large ribosomal subunit protein uL6, found in Afipia carboxidovorans (strain ATCC 49405 / DSM 1227 / KCTC 32145 / OM5) (Oligotropha carboxidovorans).